Consider the following 208-residue polypeptide: Ras-related protein RABH1b (208 aa).

16–23 (GDQSVGKT) is a binding site for GTP. The Effector region motif lies at 38–46 (YQATIGIDF). Residues 64–68 (DTAGQ), 122–125 (NKTD), and 152–153 (SA) each bind GTP. Residues Cys-206 and Cys-208 are each lipidated (S-geranylgeranyl cysteine). Cys-208 is modified (cysteine methyl ester).

The protein belongs to the small GTPase superfamily. Rab family. As to quaternary structure, interacts with the C-terminus of GC5, but not with GC3. As to expression, expressed in roots, stems, leaves and flowers.

It localises to the golgi apparatus membrane. It is found in the cytoplasm. The protein localises to the cytosol. Protein transport. Regulator of membrane traffic from the Golgi apparatus towards the endoplasmic reticulum (ER). Binds GTP and GDP and possesses intrinsic GTPase activity. The polypeptide is Ras-related protein RABH1b (RABH1B) (Arabidopsis thaliana (Mouse-ear cress)).